The primary structure comprises 403 residues: Putative glutamate--cysteine ligase 2 (403 aa).

The disordered stretch occupies residues 370–403 (ESAAQRRAPQAARRRIRASSEPLGPMSMWPERLH).

It belongs to the glutamate--cysteine ligase type 2 family. YbdK subfamily.

It carries out the reaction L-cysteine + L-glutamate + ATP = gamma-L-glutamyl-L-cysteine + ADP + phosphate + H(+). Functionally, ATP-dependent carboxylate-amine ligase which exhibits weak glutamate--cysteine ligase activity. The polypeptide is Putative glutamate--cysteine ligase 2 (Bordetella avium (strain 197N)).